The primary structure comprises 395 residues: Obg-like ATPase 1 (395 aa).

The OBG-type G domain maps to 22–280 (LKVGILGLPN…MPEDERQKYL (259 aa)). An ATP-binding site is contributed by 31–36 (NVGKST). Mg(2+) contacts are provided by Ser-35 and Thr-55. Leu-228 contributes to the ATP binding site. Positions 301–384 (QLEYFFTSGE…QDGDVIFFKF (84 aa)) constitute a TGS domain.

It belongs to the TRAFAC class OBG-HflX-like GTPase superfamily. OBG GTPase family. YchF/OLA1 subfamily. Monomer. Requires Mg(2+) as cofactor. As to expression, expressed in the nervous system, pharyngeal muscles and intestine (at protein level).

Its subcellular location is the cytoplasm. Its function is as follows. Hydrolyzes ATP, and can also hydrolyze GTP with lower efficiency. Has lower affinity for GTP. Plays a role in regulating starvation-induced thermotaxis responses in AFD thermosensory neurons. In Caenorhabditis elegans, this protein is Obg-like ATPase 1.